Reading from the N-terminus, the 73-residue chain is uncharacterized protein (73 aa).

This is an uncharacterized protein from Invertebrate iridescent virus 6 (IIV-6).